Consider the following 117-residue polypeptide: Ribosome maturation factor RimP (117 aa).

This sequence belongs to the RimP family.

Its subcellular location is the cytoplasm. Functionally, required for maturation of 30S ribosomal subunits. The chain is Ribosome maturation factor RimP from Rickettsia prowazekii (strain Madrid E).